Consider the following 108-residue polypeptide: uncharacterized protein (108 aa).

The interval 74–108 (TGSKKRDSKANSRSRPSGTITSRGARIGLQGYKSH) is disordered. Residues 84 to 95 (NSRSRPSGTITS) are compositionally biased toward polar residues.

This is an uncharacterized protein from Saccharomyces cerevisiae (strain ATCC 204508 / S288c) (Baker's yeast).